Consider the following 679-residue polypeptide: Tripartite terminase subunit 1 (679 aa).

The C3H1-type zinc finger occupies 180–208 (CIYCLNEHMMLPNQGESLPSLMMCVNCKH).

It belongs to the herpesviridae TRM1 protein family. Associates with TRM2 and TRM3 to form the tripartite terminase complex. Interacts with portal protein.

The protein localises to the host nucleus. Component of the molecular motor that translocates viral genomic DNA in empty capsid during DNA packaging. Forms a tripartite terminase complex together with TRM2 and TRM3 in the host cytoplasm. Once the complex reaches the host nucleus, it interacts with the capsid portal vertex. This portal forms a ring in which genomic DNA is translocated into the capsid. TRM1 carries an endonuclease activity that plays an important role for the cleavage of concatemeric viral DNA into unit length genomes. The sequence is that of Tripartite terminase subunit 1 from Saimiriine herpesvirus 2 (strain 11) (SaHV-2).